Reading from the N-terminus, the 514-residue chain is Peptide chain release factor 3 (514 aa).

The region spanning 8–268 is the tr-type G domain; sequence KKRRTFAIIS…TFLKFAPEPH (261 aa). GTP is bound by residues 17-24, 85-89, and 139-142; these read SHPDAGKT, DTPGH, and NKLD.

Belongs to the TRAFAC class translation factor GTPase superfamily. Classic translation factor GTPase family. PrfC subfamily.

The protein resides in the cytoplasm. Its function is as follows. Increases the formation of ribosomal termination complexes and stimulates activities of RF-1 and RF-2. It binds guanine nucleotides and has strong preference for UGA stop codons. It may interact directly with the ribosome. The stimulation of RF-1 and RF-2 is significantly reduced by GTP and GDP, but not by GMP. The chain is Peptide chain release factor 3 from Streptococcus gordonii (strain Challis / ATCC 35105 / BCRC 15272 / CH1 / DL1 / V288).